The primary structure comprises 99 residues: uncharacterized protein (99 aa).

The first 17 residues, 1 to 17 (MMMNAFFPAMALMVLVG), serve as a signal peptide directing secretion. Cysteine 18 is lipidated: N-palmitoyl cysteine. Cysteine 18 carries the S-diacylglycerol cysteine lipid modification.

The protein localises to the cell membrane. This is an uncharacterized protein from Shigella flexneri.